The following is a 96-amino-acid chain: Probable quinol oxidase subunit 4 (96 aa).

The next 3 helical transmembrane spans lie at 8–28, 37–57, and 68–88; these read TVGF…TLYT, TIIF…FMHL, and FKVI…YWVM.

This sequence belongs to the cytochrome c oxidase bacterial subunit 4 family.

The protein resides in the cell membrane. The enzyme catalyses 2 a quinol + O2 = 2 a quinone + 2 H2O. Functionally, catalyzes quinol oxidation with the concomitant reduction of oxygen to water. This is Probable quinol oxidase subunit 4 (qoxD) from Staphylococcus haemolyticus (strain JCSC1435).